Reading from the N-terminus, the 131-residue chain is Nitrogenase-stabilizing/protective protein NifW (131 aa).

It belongs to the NifW family. In terms of assembly, homotrimer; associates with NifD.

Its function is as follows. May protect the nitrogenase Fe-Mo protein from oxidative damage. The polypeptide is Nitrogenase-stabilizing/protective protein NifW (Frankia alni (strain DSM 45986 / CECT 9034 / ACN14a)).